Here is a 659-residue protein sequence, read N- to C-terminus: 4-alpha-glucanotransferase (659 aa).

The active-site Nucleophile is Glu123. The active-site Proton donor is the Asp214.

Belongs to the glycosyl hydrolase 57 family. As to quaternary structure, homodimer.

The enzyme catalyses Transfers a segment of a (1-&gt;4)-alpha-D-glucan to a new position in an acceptor, which may be glucose or a (1-&gt;4)-alpha-D-glucan.. With respect to regulation, inhibited by p-chloromercuribenzoic acid, monoiodoacetic acid, mercury and nickel ions. In terms of biological role, catalyzes the transglycosylation of maltooligosaccharides, yielding maltooligosaccharides of various lengths and glucose. Maltose and glucose can be used as acceptors in the transfer reaction. This chain is 4-alpha-glucanotransferase (jgt), found in Thermococcus litoralis (strain ATCC 51850 / DSM 5473 / JCM 8560 / NS-C).